We begin with the raw amino-acid sequence, 281 residues long: Pantothenate synthetase (281 aa).

31–38 (MGNLHAGH) provides a ligand contact to ATP. His-38 functions as the Proton donor in the catalytic mechanism. Gln-62 serves as a coordination point for (R)-pantoate. Gln-62 is a binding site for beta-alanine. 150 to 153 (GKKD) is an ATP binding site. Gln-156 serves as a coordination point for (R)-pantoate. Residues Val-179 and 187–190 (MSSR) each bind ATP.

It belongs to the pantothenate synthetase family. In terms of assembly, homodimer.

It localises to the cytoplasm. It carries out the reaction (R)-pantoate + beta-alanine + ATP = (R)-pantothenate + AMP + diphosphate + H(+). It participates in cofactor biosynthesis; (R)-pantothenate biosynthesis; (R)-pantothenate from (R)-pantoate and beta-alanine: step 1/1. Catalyzes the condensation of pantoate with beta-alanine in an ATP-dependent reaction via a pantoyl-adenylate intermediate. The chain is Pantothenate synthetase from Xylella fastidiosa (strain 9a5c).